A 154-amino-acid polypeptide reads, in one-letter code: uncharacterized protein (154 aa).

3 consecutive transmembrane segments (helical) span residues 26 to 48 (VSGW…GVVT), 97 to 119 (IAMF…LIVF), and 132 to 150 (GLYT…YCAW).

The protein localises to the cell membrane. This is an uncharacterized protein from Archaeoglobus fulgidus (strain ATCC 49558 / DSM 4304 / JCM 9628 / NBRC 100126 / VC-16).